A 199-amino-acid polypeptide reads, in one-letter code: Charged multivesicular body protein 1b (199 aa).

Residues 26-48 (DKEEKAEKAKIKKAIQKGNMEVA) are a coiled coil. The interval 132–156 (MEDTMSSTTTLTTPQGQVDMLLQEM) is interaction with IST1. The disordered stretch occupies residues 167–199 (ELPQGQTGSVGTSVASAEQDELSQRLARLRDQV). The segment covering 170 to 182 (QGQTGSVGTSVAS) has biased composition (polar residues). The tract at residues 174-199 (GSVGTSVASAEQDELSQRLARLRDQV) is interaction with SPAST. Positions 178-199 (TSVASAEQDELSQRLARLRDQV) form a coiled coil. Residues 180-196 (VASAEQDELSQRLARLR) are interaction with VPS4A, MITD1 and STAMBP. Residues 180-199 (VASAEQDELSQRLARLRDQV) form an interaction with VTA1 region. The interaction with VPS4B stretch occupies residues 183–199 (AEQDELSQRLARLRDQV). Residues 186–196 (DELSQRLARLR) carry the MIT-interacting motif motif.

This sequence belongs to the SNF7 family. As to quaternary structure, probable peripherally associated component of the endosomal sorting required for transport complex III (ESCRT-III). ESCRT-III components are thought to multimerize to form a flat lattice on the perimeter membrane of the endosome. Several assembly forms of ESCRT-III may exist that interact and act sequentially. Interacts with CHMP1A. Interacts with VTA1; the interaction probably involves the open conformation of CHMP1B. Interacts with CHMP2A. Interacts with VPS4A; the interaction is direct. Interacts with VPS4B; the interaction is direct. Interacts with SPAST (via MIT domain); the interaction is direct. Interacts with IST1. Interacts with MITD1. Interacts with STAMBP.

It localises to the cytoplasm. Its subcellular location is the cytosol. It is found in the endosome. The protein localises to the late endosome membrane. Its function is as follows. Probable peripherally associated component of the endosomal sorting required for transport complex III (ESCRT-III) which is involved in multivesicular bodies (MVBs) formation and sorting of endosomal cargo proteins into MVBs. MVBs contain intraluminal vesicles (ILVs) that are generated by invagination and scission from the limiting membrane of the endosome and mostly are delivered to lysosomes enabling degradation of membrane proteins, such as stimulated growth factor receptors, lysosomal enzymes and lipids. The MVB pathway appears to require the sequential function of ESCRT-O, -I,-II and -III complexes. ESCRT-III proteins mostly dissociate from the invaginating membrane before the ILV is released. The ESCRT machinery also functions in topologically equivalent membrane fission events, such as the terminal stages of cytokinesis and the budding of enveloped viruses (lentiviruses). ESCRT-III proteins are believed to mediate the necessary vesicle extrusion and/or membrane fission activities, possibly in conjunction with the AAA ATPase VPS4. Involved in cytokinesis. Involved in recruiting VPS4A and/or VPS4B and SPAST to the midbody of dividing cells. The chain is Charged multivesicular body protein 1b (CHMP1B) from Bos taurus (Bovine).